Reading from the N-terminus, the 409-residue chain is Lissencephaly-1 homolog (409 aa).

In terms of domain architecture, LisH spans 7-39 (QKEELNKAIADYLHQCGFEDTLNAFKQDANMPG). Residues 54–80 (TSVIRLQKKVMDLETRLSEAEKEVHHG) are a coiled coil. A disordered region spans residues 72 to 95 (EAEKEVHHGGGPKKTRSPEDWIPR). 7 WD repeats span residues 104-145 (GHRS…RTLK), 146-187 (GHTD…RTLH), 188-229 (GHDH…KTFQ), 231-269 (HGEW…CKCD), 272-332 (DHDH…CLVT), 335-374 (GHDN…CAKT), and 377-409 (AHEH…WECR).

This sequence belongs to the WD repeat LIS1/nudF family.

The protein resides in the cytoplasm. Its subcellular location is the cytoskeleton. The protein localises to the microtubule organizing center. It localises to the centrosome. Positively regulates the activity of the minus-end directed microtubule motor protein dynein. May enhance dynein-mediated microtubule sliding by targeting dynein to the microtubule plus end. Required for several dynein- and microtubule-dependent processes. This is Lissencephaly-1 homolog from Nematostella vectensis (Starlet sea anemone).